Reading from the N-terminus, the 314-residue chain is Ferric-anguibactin transport system permease protein FatD (314 aa).

The next 10 membrane-spanning stretches (helical) occupy residues 1–21 (MTFR…FFGA), 49–69 (VALI…QHIV), 76–96 (PGTT…IVML), 103–123 (ERMF…IAII), 132–152 (ALVP…AEFY), 180–200 (IIFL…RFTV), 207–226 (IASN…LILV), 230–252 (VAVT…NLVA), 265–285 (IVAL…RVVL), and 288–308 (FEVP…LAFL).

This sequence belongs to the binding-protein-dependent transport system permease family. FecCD subfamily. Part of an iron transport system composed of the outer membrane receptor FatA, the periplasmic binding protein FatB and the inner membrane proteins FatC and FatD.

It is found in the cell inner membrane. Involved in the uptake of iron in complex with the siderophore anguibactin. Responsible for the translocation of ferric-anguibactin across the cytoplasmic membrane. In Vibrio anguillarum (strain ATCC 68554 / 775) (Listonella anguillarum), this protein is Ferric-anguibactin transport system permease protein FatD.